A 277-amino-acid polypeptide reads, in one-letter code: Digeranylgeranylglyceryl phosphate synthase (277 aa).

8 helical membrane passes run 16 to 36, 40 to 60, 93 to 113, 129 to 149, 153 to 173, 199 to 218, 222 to 244, and 253 to 273; these read ILAG…IPPV, ILIF…NDYF, FIGL…ALGA, FIGN…GAVG, IDLA…REIM, SGII…FLPV, IGLG…IDVL, and GQKI…LGAL.

Belongs to the UbiA prenyltransferase family. DGGGP synthase subfamily. It depends on Mg(2+) as a cofactor.

It is found in the cell membrane. The enzyme catalyses sn-3-O-(geranylgeranyl)glycerol 1-phosphate + (2E,6E,10E)-geranylgeranyl diphosphate = 2,3-bis-O-(geranylgeranyl)-sn-glycerol 1-phosphate + diphosphate. The protein operates within membrane lipid metabolism; glycerophospholipid metabolism. Its function is as follows. Prenyltransferase that catalyzes the transfer of the geranylgeranyl moiety of geranylgeranyl diphosphate (GGPP) to the C2 hydroxyl of (S)-3-O-geranylgeranylglyceryl phosphate (GGGP). This reaction is the second ether-bond-formation step in the biosynthesis of archaeal membrane lipids. This is Digeranylgeranylglyceryl phosphate synthase from Pyrococcus horikoshii (strain ATCC 700860 / DSM 12428 / JCM 9974 / NBRC 100139 / OT-3).